We begin with the raw amino-acid sequence, 275 residues long: Ribosomal RNA small subunit methyltransferase A (275 aa).

Residues Asn-21, Leu-23, Gly-48, Glu-69, Asp-94, and Asn-115 each coordinate S-adenosyl-L-methionine.

Belongs to the class I-like SAM-binding methyltransferase superfamily. rRNA adenine N(6)-methyltransferase family. RsmA subfamily.

It localises to the cytoplasm. The catalysed reaction is adenosine(1518)/adenosine(1519) in 16S rRNA + 4 S-adenosyl-L-methionine = N(6)-dimethyladenosine(1518)/N(6)-dimethyladenosine(1519) in 16S rRNA + 4 S-adenosyl-L-homocysteine + 4 H(+). Its function is as follows. Specifically dimethylates two adjacent adenosines (A1518 and A1519) in the loop of a conserved hairpin near the 3'-end of 16S rRNA in the 30S particle. May play a critical role in biogenesis of 30S subunits. The chain is Ribosomal RNA small subunit methyltransferase A from Clostridium botulinum (strain Kyoto / Type A2).